We begin with the raw amino-acid sequence, 763 residues long: uncharacterized protein (763 aa).

Residues 380-607 (DSVLNPFNTN…YNIKVITMRL (228 aa)) form the TR mART core domain. A helical membrane pass occupies residues 684-700 (SYVSIYALLCPLLTNIY).

The protein resides in the membrane. This is an uncharacterized protein from Acanthamoeba polyphaga mimivirus (APMV).